The chain runs to 387 residues: Penicillopepsin-1 (387 aa).

Residues 1-19 (MVNSKTVVSALALSALAAA) form the signal peptide. A propeptide spans 20–66 (APAPSSTTSFSINQVAVKKPAIHPAVKYAKALAKYHAEIPSNVASAA) (activation peptide). The Peptidase A1 domain occupies 85 to 384 (YVTPITAGSS…DGDNLQLGFA (300 aa)). Active-site residues include Asp101 and Asp279. Residue Asn304 is glycosylated (N-linked (GlcNAc...) asparagine). The cysteines at positions 315 and 347 are disulfide-linked.

The protein belongs to the peptidase A1 family. In terms of assembly, monomer.

It localises to the secreted. It catalyses the reaction Hydrolysis of proteins with broad specificity similar to that of pepsin A, preferring hydrophobic residues at P1 and P1', but also cleaving 20-Gly-|-Glu-21 in the B chain of insulin. Clots milk, and activates trypsinogen.. In terms of biological role, secreted aspartic endopeptidase that allows assimilation of proteinaceous substrates. The scissile peptide bond is attacked by a nucleophilic water molecule activated by two aspartic residues in the active site. Shows a broad primary substrate specificity. Favors hydrophobic residues at the P1 and P1' positions, but can also activate trypsinogen and hydrolyze the B chain of insulin between positions 'Gly-20' and 'Glu-21'. This chain is Penicillopepsin-1 (pepA), found in Talaromyces stipitatus (strain ATCC 10500 / CBS 375.48 / QM 6759 / NRRL 1006) (Penicillium stipitatum).